The chain runs to 349 residues: Delta(7)-sterol 5(6)-desaturase ERG3A (349 aa).

Transmembrane regions (helical) follow at residues 84-104, 124-144, and 162-182; these read ITWI…YIFI, IIAA…FFLL, and LWYD…CIYW. The region spanning 170–296 is the Fatty acid hydroxylase domain; the sequence is PLFLLFTDFC…FTAFDRMGGT (127 aa). Positions 184 to 188 match the Histidine box-1 motif; it reads HRWLH. The Histidine box-2 signature appears at 197-201; it reads HKLHH. A helical membrane pass occupies residues 227–247; the sequence is HIFPFIFPLQKMAYVALFVFV. Positions 272–276 match the Histidine box-3 motif; that stretch reads HSLHH.

It belongs to the sterol desaturase family.

Its subcellular location is the endoplasmic reticulum membrane. The enzyme catalyses episterol + 2 Fe(II)-[cytochrome b5] + O2 + 2 H(+) = 5-dehydroepisterol + 2 Fe(III)-[cytochrome b5] + 2 H2O. The protein operates within steroid metabolism; ergosterol biosynthesis. C-5 sterol desaturase; part of the third module of ergosterol biosynthesis pathway that includes the late steps of the pathway. ERG3A and ERG3BB catalyze the introduction of a C-5 double bond in the B ring to produce 5-dehydroepisterol. The third module or late pathway involves the ergosterol synthesis itself through consecutive reactions that mainly occur in the endoplasmic reticulum (ER) membrane. Firstly, the squalene synthase ERG9 catalyzes the condensation of 2 farnesyl pyrophosphate moieties to form squalene, which is the precursor of all steroids. Squalene synthase is crucial for balancing the incorporation of farnesyl diphosphate (FPP) into sterol and nonsterol isoprene synthesis. Secondly, squalene is converted into lanosterol by the consecutive action of the squalene epoxidase ERG1 and the lanosterol synthase ERG7. Then, the delta(24)-sterol C-methyltransferase ERG6 methylates lanosterol at C-24 to produce eburicol. Eburicol is the substrate of the sterol 14-alpha demethylase encoded by CYP51A, CYP51B and CYP51C, to yield 4,4,24-trimethyl ergosta-8,14,24(28)-trienol. CYP51B encodes the enzyme primarily responsible for sterol 14-alpha-demethylation, and plays an essential role in ascospore formation. CYP51A encodes an additional sterol 14-alpha-demethylase, induced on ergosterol depletion and responsible for the intrinsic variation in azole sensitivity. The third CYP51 isoform, CYP51C, does not encode a sterol 14-alpha-demethylase, but is required for full virulence on host wheat ears. The C-14 reductase ERG24 then reduces the C14=C15 double bond which leads to 4,4-dimethylfecosterol. A sequence of further demethylations at C-4, involving the C-4 demethylation complex containing the C-4 methylsterol oxidases ERG25, the sterol-4-alpha-carboxylate 3-dehydrogenase ERG26 and the 3-keto-steroid reductase ERG27, leads to the production of fecosterol via 4-methylfecosterol. ERG28 has a role as a scaffold to help anchor ERG25, ERG26 and ERG27 to the endoplasmic reticulum. The C-8 sterol isomerase ERG2 then catalyzes the reaction which results in unsaturation at C-7 in the B ring of sterols and thus converts fecosterol to episterol. The sterol-C5-desaturases ERG3A and ERG3BB then catalyze the introduction of a C-5 double bond in the B ring to produce 5-dehydroepisterol. The C-22 sterol desaturases ERG5A and ERG5B further convert 5-dehydroepisterol into ergosta-5,7,22,24(28)-tetraen-3beta-ol by forming the C-22(23) double bond in the sterol side chain. Finally, ergosta-5,7,22,24(28)-tetraen-3beta-ol is substrate of the C-24(28) sterol reductase ERG4 to produce ergosterol. The chain is Delta(7)-sterol 5(6)-desaturase ERG3A from Gibberella zeae (strain ATCC MYA-4620 / CBS 123657 / FGSC 9075 / NRRL 31084 / PH-1) (Wheat head blight fungus).